The sequence spans 146 residues: Snake venom vascular endothelial growth factor toxin TfsvVEGF (146 aa).

Positions M1–G24 are cleaved as a signal peptide. Q25 is modified (pyrrolidone carboxylic acid). Intrachain disulfides connect C38-C80, C69-C115, and C73-C117. Residues R118–P139 show a composition bias toward basic and acidic residues. The tract at residues R118–V146 is disordered.

The protein belongs to the PDGF/VEGF growth factor family. Snake venom VEGF subfamily. In terms of assembly, homodimer; disulfide-linked. Interacts with VEGF receptor-1 (FLT1) with a high affinity, whereas it binds to VEGF receptor-2 (KDR) with a low affinity. Does not bind VEGF receptor-3 (FLT4). As to expression, expressed by the venom gland.

The protein localises to the secreted. Snake venom VEGFs may contribute to venom dispersion and prey subjugation by inducing vascular permeability and hypotension. This protein strongly increases vascular permeability, and weakly stimulates angiogenesis. Interacts with VEGF receptor-1 (FLT1) with a high affinity, whereas it binds to VEGF receptor-2 (KDR) with a low affinity. Stimulates autophosphorylation of VEGF receptor-1 (VEGFR-1/FLT1), and VEGF receptor-2 (VEGFR-2/KDR). In Protobothrops flavoviridis (Habu), this protein is Snake venom vascular endothelial growth factor toxin TfsvVEGF.